A 277-amino-acid chain; its full sequence is Inositol monophosphatase 1 (277 aa).

Mg(2+) contacts are provided by E70, D90, I92, and D93. E70 serves as a coordination point for substrate. Substrate-binding positions include 92-95, 194-196, E213, and D220; these read IDGT and GTA. Residue D220 participates in Mg(2+) binding.

This sequence belongs to the inositol monophosphatase superfamily. Homodimer. Mg(2+) serves as cofactor. Ubiquitous.

The protein localises to the cytoplasm. The enzyme catalyses a myo-inositol phosphate + H2O = myo-inositol + phosphate. The catalysed reaction is 1D-myo-inositol 1-phosphate + H2O = myo-inositol + phosphate. It catalyses the reaction 1D-myo-inositol 2-phosphate + H2O = myo-inositol + phosphate. It carries out the reaction 1D-myo-inositol 3-phosphate + H2O = myo-inositol + phosphate. The enzyme catalyses 1D-myo-inositol 4-phosphate + H2O = myo-inositol + phosphate. The catalysed reaction is 1D-myo-inositol 5-phosphate + H2O = myo-inositol + phosphate. It catalyses the reaction 1D-myo-inositol 6-phosphate + H2O = myo-inositol + phosphate. It carries out the reaction scyllo-inositol 1-phosphate + H2O = scyllo-inositol + phosphate. The enzyme catalyses alpha-D-galactose 1-phosphate + H2O = D-galactose + phosphate. The catalysed reaction is alpha-D-glucose 1-phosphate + H2O = D-glucose + phosphate. It catalyses the reaction D-glucose 6-phosphate + H2O = D-glucose + phosphate. It carries out the reaction beta-D-fructose 1-phosphate + H2O = D-fructose + phosphate. The enzyme catalyses glycerol 2-phosphate + H2O = glycerol + phosphate. The catalysed reaction is adenosine 2'-phosphate + H2O = adenosine + phosphate. The protein operates within polyol metabolism; myo-inositol biosynthesis; myo-inositol from D-glucose 6-phosphate: step 2/2. Activity with myo-inositol monophosphate and D-galactose 1-phosphate is inhibited by Li(+), Ca(2+) and Mn(2+), but also by Mg(2+) at concentrations above 3 mM. In terms of biological role, phosphatase involved in the dephosphorylation of myo-inositol monophosphate to generate myo-inositol. Is also able to dephosphorylate scyllo-inositol-phosphate, myo-inositol 1,4-diphosphate, scyllo-inositol-1,3-diphosphate and scyllo-inositol-1,4-diphosphate. Also dephosphorylates in vitro other sugar-phosphates including D-galactose-1-phosphate, glucose-1-phosphate, glucose-6-phosphate, fructose-1-phosphate, beta-glycerophosphate and 2'-AMP. Responsible for the provision of inositol required for synthesis of phosphatidylinositol and polyphosphoinositides, and involved in maintaining normal brain function. Has been implicated as the pharmacological target for lithium Li(+) action in brain. Is equally active with myo-inositol monophosphate and D-galactose 1-phosphate. This is Inositol monophosphatase 1 (Impa1) from Rattus norvegicus (Rat).